We begin with the raw amino-acid sequence, 91 residues long: CRISPR-associated endoribonuclease Cas2 2 (91 aa).

Aspartate 8 provides a ligand contact to Mg(2+).

Belongs to the CRISPR-associated endoribonuclease Cas2 protein family. Homodimer, forms a heterotetramer with a Cas1 homodimer. Requires Mg(2+) as cofactor.

CRISPR (clustered regularly interspaced short palindromic repeat), is an adaptive immune system that provides protection against mobile genetic elements (viruses, transposable elements and conjugative plasmids). CRISPR clusters contain sequences complementary to antecedent mobile elements and target invading nucleic acids. CRISPR clusters are transcribed and processed into CRISPR RNA (crRNA). Functions as a ssRNA-specific endoribonuclease. Involved in the integration of spacer DNA into the CRISPR cassette. The polypeptide is CRISPR-associated endoribonuclease Cas2 2 (Pyrobaculum aerophilum (strain ATCC 51768 / DSM 7523 / JCM 9630 / CIP 104966 / NBRC 100827 / IM2)).